Here is a 122-residue protein sequence, read N- to C-terminus: Large ribosomal subunit protein uL14 (122 aa).

It belongs to the universal ribosomal protein uL14 family. As to quaternary structure, part of the 50S ribosomal subunit. Forms a cluster with proteins L3 and L19. In the 70S ribosome, L14 and L19 interact and together make contacts with the 16S rRNA in bridges B5 and B8.

Binds to 23S rRNA. Forms part of two intersubunit bridges in the 70S ribosome. This chain is Large ribosomal subunit protein uL14, found in Chloroherpeton thalassium (strain ATCC 35110 / GB-78).